The following is a 147-amino-acid chain: Prefoldin subunit alpha 2 (147 aa).

Belongs to the prefoldin subunit alpha family. Heterohexamer of two alpha and four beta subunits.

It is found in the cytoplasm. In terms of biological role, molecular chaperone capable of stabilizing a range of proteins. Seems to fulfill an ATP-independent, HSP70-like function in archaeal de novo protein folding. The protein is Prefoldin subunit alpha 2 (pfdA2) of Methanocaldococcus jannaschii (strain ATCC 43067 / DSM 2661 / JAL-1 / JCM 10045 / NBRC 100440) (Methanococcus jannaschii).